The primary structure comprises 427 residues: Phosphoribosylamine--glycine ligase (427 aa).

The region spanning 109 to 313 is the ATP-grasp domain; sequence RNLMAEYKIE…LAEVVTGITE (205 aa). 136–191 contacts ATP; it reads VRDHDGDLAVKPIGLTGGKGVRIMGEQVDRAGAIEYIREINGGVVLEERLTGEEFT. 3 residues coordinate Mg(2+): Q271, E283, and N285. Mn(2+) contacts are provided by Q271, E283, and N285.

Belongs to the GARS family. Requires Mg(2+) as cofactor. Mn(2+) is required as a cofactor.

The catalysed reaction is 5-phospho-beta-D-ribosylamine + glycine + ATP = N(1)-(5-phospho-beta-D-ribosyl)glycinamide + ADP + phosphate + H(+). Its pathway is purine metabolism; IMP biosynthesis via de novo pathway; N(1)-(5-phospho-D-ribosyl)glycinamide from 5-phospho-alpha-D-ribose 1-diphosphate: step 2/2. The polypeptide is Phosphoribosylamine--glycine ligase (Methanoregula boonei (strain DSM 21154 / JCM 14090 / 6A8)).